The following is a 199-amino-acid chain: MSNMEKHLFNLKFAAKELNRSSKKCDKEEKAEKAKIKKAIQKGNMEVARIHAENAIRQKNQGVNFLRMSARVDAVAARVQTAVTMGKVTKSMAGVVKSMDATLKSMNLEKISALMDKFEHQFETLDVQTQQMEDTMSSTTTLTTPQNQVDMLLQEMADEAGLDLNMELPQGQTGSVGTSVASAEQDELSQRLARLRDQV.

A coiled-coil region spans residues 10-48; it reads NLKFAAKELNRSSKKCDKEEKAEKAKIKKAIQKGNMEVA. Residues 132–156 are interaction with IST1; sequence MEDTMSSTTTLTTPQNQVDMLLQEM. The interval 167–199 is disordered; that stretch reads ELPQGQTGSVGTSVASAEQDELSQRLARLRDQV. Polar residues predominate over residues 170–182; that stretch reads QGQTGSVGTSVAS. An interaction with SPAST region spans residues 174–199; the sequence is GSVGTSVASAEQDELSQRLARLRDQV. A coiled-coil region spans residues 178–199; it reads TSVASAEQDELSQRLARLRDQV. The interaction with VPS4A, MITD1 and STAMBP stretch occupies residues 180-196; that stretch reads VASAEQDELSQRLARLR. An interaction with VTA1 region spans residues 180–199; that stretch reads VASAEQDELSQRLARLRDQV. Residues 183 to 199 are interaction with VPS4B; it reads AEQDELSQRLARLRDQV. The MIT-interacting motif signature appears at 186-196; the sequence is DELSQRLARLR.

It belongs to the SNF7 family. Probable peripherally associated component of the endosomal sorting required for transport complex III (ESCRT-III). ESCRT-III components are thought to multimerize to form a flat lattice on the perimeter membrane of the endosome. Several assembly forms of ESCRT-III may exist that interact and act sequentially. Interacts with CHMP1A. Interacts with VTA1; the interaction probably involves the open conformation of CHMP1B. Interacts with CHMP2A. Interacts with VPS4A; the interaction is direct. Interacts with VPS4B; the interaction is direct. Interacts with SPAST (via MIT domain); the interaction is direct. Interacts with IST1. Interacts with MITD1. Interacts with STAMBP.

The protein resides in the cytoplasm. Its subcellular location is the cytosol. It is found in the endosome. It localises to the late endosome membrane. In terms of biological role, probable peripherally associated component of the endosomal sorting required for transport complex III (ESCRT-III) which is involved in multivesicular bodies (MVBs) formation and sorting of endosomal cargo proteins into MVBs. MVBs contain intraluminal vesicles (ILVs) that are generated by invagination and scission from the limiting membrane of the endosome and mostly are delivered to lysosomes enabling degradation of membrane proteins, such as stimulated growth factor receptors, lysosomal enzymes and lipids. The MVB pathway appears to require the sequential function of ESCRT-O, -I,-II and -III complexes. ESCRT-III proteins mostly dissociate from the invaginating membrane before the ILV is released. The ESCRT machinery also functions in topologically equivalent membrane fission events, such as the terminal stages of cytokinesis. ESCRT-III proteins are believed to mediate the necessary vesicle extrusion and/or membrane fission activities, possibly in conjunction with the AAA ATPase VPS4. Involved in cytokinesis. Involved in recruiting VPS4A and/or VPS4B and SPAST to the midbody of dividing cells. The polypeptide is Charged multivesicular body protein 1B1 (Mus musculus (Mouse)).